A 481-amino-acid polypeptide reads, in one-letter code: O-acetyltransferase andG (481 aa).

Belongs to the fumigaclavine B O-acetyltransferase family. In terms of assembly, monomer.

Its pathway is secondary metabolite biosynthesis; terpenoid biosynthesis. In terms of biological role, O-acetyltransferase; part of the gene cluster that mediates the biosynthesis of anditomin, a fungal meroterpenoid. The first step of the pathway is the synthesis of 3,5-dimethylorsellinic acid (DMOA) by the polyketide synthase andM. DMOA is then converted to the phthalide compound 5,7-dihydroxy-4,6-dimethylphthalide (DHDMP) by the cytochrome P450 monooxygenase andK, which is further prenylated by the prenyltransferase andD to yield farnesyl-DHDMP. Further epoxidation by the FAD-dependent monooxygenase andE leads to epoxyfarnesyl-DHDMP. The next step involves the terpene cyclase andB that converts epoxyfarnesyl-DHDMP into preandiloid A through opening of the epoxide ring followed by the cyclization of the farnesyl moiety. Preandiloid A is in turn oxidized at the C-3 hydroxyl group to yield preandiloid B by the dehydrogenase andC. The dioxygenase andA is solely responsible for the dehydrogenation of preandiloid B leading to the enone preandiloid C, as well as for the intriguing structural rearrangement to generate the bicyclo[2.2.2]octane core, transforming preandiloid C into andiconin. FAD-binding monooxygenase andJ then produces andilesin D which is reduced by dehydrogenase andI to yield andilesin A. Action of acetyltransferase andG followed by a spontaneous acetate elimination leads then to andilesin B, which is in turn substrate of the short chain dehydrogenase andH to yield andilesin C. Finally, the dioxygenase andF catalyzes the transformation of andilesin C to anditomin. The polypeptide is O-acetyltransferase andG (Emericella variicolor (Aspergillus stellatus)).